We begin with the raw amino-acid sequence, 388 residues long: Cobalt-precorrin-5B C(1)-methyltransferase (388 aa).

Belongs to the CbiD family.

It catalyses the reaction Co-precorrin-5B + S-adenosyl-L-methionine = Co-precorrin-6A + S-adenosyl-L-homocysteine. It participates in cofactor biosynthesis; adenosylcobalamin biosynthesis; cob(II)yrinate a,c-diamide from sirohydrochlorin (anaerobic route): step 6/10. Functionally, catalyzes the methylation of C-1 in cobalt-precorrin-5B to form cobalt-precorrin-6A. This chain is Cobalt-precorrin-5B C(1)-methyltransferase, found in Rubrobacter xylanophilus (strain DSM 9941 / JCM 11954 / NBRC 16129 / PRD-1).